We begin with the raw amino-acid sequence, 218 residues long: Octanoyltransferase (218 aa).

The BPL/LPL catalytic domain maps to 31–206 (EETPDEVWLV…ELVNLLGYEQ (176 aa)). Substrate-binding positions include 70–77 (RGGQVTYH), 137–139 (SLG), and 150–152 (GLA). Cys168 acts as the Acyl-thioester intermediate in catalysis.

Belongs to the LipB family.

It is found in the cytoplasm. The enzyme catalyses octanoyl-[ACP] + L-lysyl-[protein] = N(6)-octanoyl-L-lysyl-[protein] + holo-[ACP] + H(+). The protein operates within protein modification; protein lipoylation via endogenous pathway; protein N(6)-(lipoyl)lysine from octanoyl-[acyl-carrier-protein]: step 1/2. Its function is as follows. Catalyzes the transfer of endogenously produced octanoic acid from octanoyl-acyl-carrier-protein onto the lipoyl domains of lipoate-dependent enzymes. Lipoyl-ACP can also act as a substrate although octanoyl-ACP is likely to be the physiological substrate. This chain is Octanoyltransferase, found in Vibrio vulnificus (strain YJ016).